Here is a 259-residue protein sequence, read N- to C-terminus: MLQIADTTFTSRLFTGTGKFATPTLMLEALQASGSQLVTMAMKRVDLRGGNDAILAPLQQLGVRLLPNTSGAKTAAEAVFAARLAREALGTHWVKLEIHPDVKYLLPDPIETLKAAEILVKEGFVVLPYCGADPVLCKRLEEAGCAAVMPLGAPIGSNRGLRTRDFLEIIIEQARVPVVVDAGIGAPSHALEAMELGADAVLVNTAIAVARDPVQMARAFRLALEAGELARQAGLGSSQRNAVASSPLTAFLSQTGETL.

The active-site Schiff-base intermediate with DXP is Lys-95. 1-deoxy-D-xylulose 5-phosphate is bound by residues Gly-156, 182–183 (AG), and 204–205 (NT).

The protein belongs to the ThiG family. As to quaternary structure, homotetramer. Forms heterodimers with either ThiH or ThiS.

It is found in the cytoplasm. The enzyme catalyses [ThiS sulfur-carrier protein]-C-terminal-Gly-aminoethanethioate + 2-iminoacetate + 1-deoxy-D-xylulose 5-phosphate = [ThiS sulfur-carrier protein]-C-terminal Gly-Gly + 2-[(2R,5Z)-2-carboxy-4-methylthiazol-5(2H)-ylidene]ethyl phosphate + 2 H2O + H(+). It participates in cofactor biosynthesis; thiamine diphosphate biosynthesis. In terms of biological role, catalyzes the rearrangement of 1-deoxy-D-xylulose 5-phosphate (DXP) to produce the thiazole phosphate moiety of thiamine. Sulfur is provided by the thiocarboxylate moiety of the carrier protein ThiS. In vitro, sulfur can be provided by H(2)S. The sequence is that of Thiazole synthase from Serratia proteamaculans (strain 568).